The primary structure comprises 131 residues: Small ribosomal subunit protein bS16 (131 aa).

The segment covering Ile87–Glu117 has biased composition (basic and acidic residues). Residues Ile87 to Ala131 are disordered.

It belongs to the bacterial ribosomal protein bS16 family.

This is Small ribosomal subunit protein bS16 from Prochlorococcus marinus (strain SARG / CCMP1375 / SS120).